The following is a 718-amino-acid chain: Protein ENHANCED DISEASE RESISTANCE 2 (718 aa).

A PH domain is found at 3–110 (KVVYEGWMVR…WKEKIESVID (108 aa)). The tract at residues 134-174 (TGRTASSSDHESQFSAAEDEEDSRRSLMRRTTIGNGPPESV) is disordered. Residues 180-392 (EFDAELANQN…VAGLREWFSQ (213 aa)) enclose the START domain. The interval 437–483 (RNSLLMDEDSDDDDEFQIAESEQEPETSKPETDVKRPEEEPAHNIDL) is disordered. The segment covering 442-461 (MDEDSDDDDEFQIAESEQEP) has biased composition (acidic residues). Positions 462 to 479 (ETSKPETDVKRPEEEPAH) are enriched in basic and acidic residues. Residues 664 to 684 (GVLGLVIGVITSLVVEMAFLV) form a helical membrane-spanning segment.

Expressed ubiquitously in all tissues and organs, including leaves, roots, flowers, stems and siliques.

The protein resides in the endoplasmic reticulum membrane. It localises to the cell membrane. Its subcellular location is the endosome membrane. Its function is as follows. Negative regulator of the salicylic acid- (SA-) mediated resistance to pathogens, including the biotrophic powdery mildew pathogens Golovinomyces cichoracearum and Blumeria graminis, and the downy mildew pathogen Hyaloperonospora parasitica, probably by limiting the initiation of cell death and the establishment of the hypersensitive response (HR). Prevents ethylene-induced senescence. Binds to phosphatidylinositol-4-phosphate (PtdIns(4)P) in vitro. The sequence is that of Protein ENHANCED DISEASE RESISTANCE 2 (EDR2) from Arabidopsis thaliana (Mouse-ear cress).